The chain runs to 297 residues: MSFDQLHRYLFNQAHVRGELVRLENSYQSILDSYAYPPVIQKLLGELMAATSLLTATLKFEGDIALQLQSDGPVNYAVINGTHDQQLRGVARWDESLAELPTDFSQLFTKGILVITITPEDGERYQGMVALDKPTLAECIESYFQQSEQLATKVILRTQQTDSGAKACGMFLQILPTSSQATATTDTGFEHLAKLTETIKNEELFSLPAEDILYRLYHQEEIEVYPPADIIFKCSCSRERSANALAAVEKAELLDIVATEGAIKMNCQYCHREYRFDEIDVHAIHAGTFAMDTQNDQ.

2 cysteine pairs are disulfide-bonded: C234/C236 and C267/C270.

This sequence belongs to the HSP33 family. Under oxidizing conditions two disulfide bonds are formed involving the reactive cysteines. Under reducing conditions zinc is bound to the reactive cysteines and the protein is inactive.

The protein localises to the cytoplasm. Redox regulated molecular chaperone. Protects both thermally unfolding and oxidatively damaged proteins from irreversible aggregation. Plays an important role in the bacterial defense system toward oxidative stress. This is 33 kDa chaperonin from Pseudoalteromonas atlantica (strain T6c / ATCC BAA-1087).